Consider the following 349-residue polypeptide: Flagellar P-ring protein (349 aa).

The signal sequence occupies residues 1 to 20; the sequence is MSKAIKILLPLLLFSLSLQA.

This sequence belongs to the FlgI family. The basal body constitutes a major portion of the flagellar organelle and consists of four rings (L,P,S, and M) mounted on a central rod.

It localises to the periplasm. The protein resides in the bacterial flagellum basal body. Assembles around the rod to form the L-ring and probably protects the motor/basal body from shearing forces during rotation. The sequence is that of Flagellar P-ring protein from Wolinella succinogenes (strain ATCC 29543 / DSM 1740 / CCUG 13145 / JCM 31913 / LMG 7466 / NCTC 11488 / FDC 602W) (Vibrio succinogenes).